The chain runs to 89 residues: Small ribosomal subunit protein uS14 (89 aa).

It belongs to the universal ribosomal protein uS14 family. In terms of assembly, part of the 30S ribosomal subunit. Contacts proteins S3 and S10.

In terms of biological role, binds 16S rRNA, required for the assembly of 30S particles and may also be responsible for determining the conformation of the 16S rRNA at the A site. The protein is Small ribosomal subunit protein uS14 of Parabacteroides distasonis (strain ATCC 8503 / DSM 20701 / CIP 104284 / JCM 5825 / NCTC 11152).